The following is a 361-amino-acid chain: 45 kDa calcium-binding protein (361 aa).

An N-terminal signal peptide occupies residues 1–35 (MVWLVAMTPRQSSLCGLAAHGLWFLGLVLLMDATA). An N-linked (GlcNAc...) asparagine glycan is attached at asparagine 39. EF-hand domains are found at residues 97 to 132 (RSRR…KTAE) and 136 to 171 (EAVK…SKGH). Serine 98 is subject to Phosphoserine. Residues aspartate 110, asparagine 112, aspartate 114, arginine 116, glutamate 121, aspartate 149, aspartate 151, aspartate 153, histidine 155, and glutamate 160 each contribute to the Ca(2+) site. Threonine 192 is subject to Phosphothreonine. EF-hand domains are found at residues 196-231 (LGNL…HSRG), 232-267 (MLKF…TVEN), 277-312 (WVKD…MNEY), and 313-348 (NALN…FTGS). Aspartate 212 lines the Ca(2+) pocket. Threonine 216 bears the Phosphothreonine mark. Ca(2+) contacts are provided by glutamate 219, aspartate 245, aspartate 247, aspartate 249, glutamine 251, and glutamate 256. Threonine 264 carries the post-translational modification Phosphothreonine. Aspartate 290, asparagine 292, and aspartate 294 together coordinate Ca(2+). Threonine 298 carries the post-translational modification Phosphothreonine. Glutamate 301, aspartate 326, asparagine 328, asparagine 330, histidine 332, and glutamate 337 together coordinate Ca(2+). Residues 308–361 (PMNEYNALNEAKQMIAIADENQNHHLEPEEILKYSEFFTGSKLMDYARNVHEEF) are necessary for intracellular retention in Golgi apparatus lumen.

Belongs to the CREC family. Ubiquitous.

The protein resides in the golgi apparatus lumen. Its function is as follows. May regulate calcium-dependent activities in the endoplasmic reticulum lumen or post-ER compartment. The chain is 45 kDa calcium-binding protein (Sdf4) from Mus musculus (Mouse).